Reading from the N-terminus, the 218-residue chain is Adenylate kinase (218 aa).

ATP is bound at residue 12–17; that stretch reads GAGKGT. An NMP region spans residues 32-61; the sequence is STGDMLREARSSGTEMGKRVAEVMDRGELV. AMP-binding positions include Thr-33, Arg-38, 59 to 61, 85 to 88, and Gln-92; these read ELV and GFPR. Residues 126-164 are LID; that stretch reads GRFTCGNCGEVYHDVTKPTKEPGKCDVCGSTDLRRRADD. Arg-127 is a binding site for ATP. The Zn(2+) site is built by Cys-130 and Cys-133. ATP is bound at residue 136–137; the sequence is VY. Cys-150 and Cys-153 together coordinate Zn(2+). AMP-binding residues include Arg-161 and Arg-172. Ala-200 is an ATP binding site.

The protein belongs to the adenylate kinase family. Monomer.

Its subcellular location is the cytoplasm. It carries out the reaction AMP + ATP = 2 ADP. It functions in the pathway purine metabolism; AMP biosynthesis via salvage pathway; AMP from ADP: step 1/1. Its function is as follows. Catalyzes the reversible transfer of the terminal phosphate group between ATP and AMP. Plays an important role in cellular energy homeostasis and in adenine nucleotide metabolism. The protein is Adenylate kinase of Paracoccus denitrificans (strain Pd 1222).